A 497-amino-acid polypeptide reads, in one-letter code: 4,4'-diaponeurosporene oxygenase (497 aa).

7–19 (VIGGGLGGISAAI) contributes to the FAD binding site.

It belongs to the carotenoid/retinoid oxidoreductase family. CrtP subfamily. It depends on FAD as a cofactor.

It catalyses the reaction all-trans-4,4'-diaponeurosporene + 2 AH2 + 2 O2 = 4,4'-diaponeurosporenal + 2 A + 3 H2O. It functions in the pathway carotenoid biosynthesis; staphyloxanthin biosynthesis; staphyloxanthin from farnesyl diphosphate: step 3/5. Functionally, involved in the biosynthesis of the yellow-orange carotenoid staphyloxanthin, which plays a role in the virulence via its protective function against oxidative stress. Catalyzes the oxidation of the terminal methyl side group of 4,4'-diaponeurosporene to form 4,4'-diaponeurosporen-4-al. The C40 carotenoid lycopene is a poor substrate. This Staphylococcus aureus (strain Mu50 / ATCC 700699) protein is 4,4'-diaponeurosporene oxygenase.